Consider the following 366-residue polypeptide: Prostaglandin F2-alpha receptor (366 aa).

Over 1–31 (MSINSSKQPASSAAGLIANTTCQTENRLSVF) the chain is Extracellular. 2 N-linked (GlcNAc...) asparagine glycosylation sites follow: asparagine 4 and asparagine 19. The helical transmembrane segment at 32-55 (FSIIFMTVGIVSNSLAIAILMKAY) threads the bilayer. The Cytoplasmic portion of the chain corresponds to 56–69 (QRFRRKSKASFLLL). Residues 70-90 (ASGLVITDFFGHLINGGIAVF) traverse the membrane as a helical segment. Topologically, residues 91 to 109 (VYASDKDWIRFDQSNILCS) are extracellular. Cysteine 108 and cysteine 186 are disulfide-bonded. A helical transmembrane segment spans residues 110–131 (VFGISMVFSGLCPLFLGSTMAI). The Cytoplasmic segment spans residues 132–152 (ERCIGVTNPLFHSTKITSKHV). The helical transmembrane segment at 153–175 (KMILSGVCMFAVFVALLPILGHR) threads the bilayer. At 176–198 (DYQIQASRTWCFYNTEHIEDWED) the chain is on the extracellular side. A helical membrane pass occupies residues 199–224 (RFYLLFFSSLGLLALGISFSCNAVTG). The Cytoplasmic segment spans residues 225-250 (VTLLRVKFRSQQHRQGRSHHLEMVIQ). Residues 251–267 (LLAIMCVSCVCWSPFLV) traverse the membrane as a helical segment. Topologically, residues 268–285 (TMANIAINGNNSPVTCET) are extracellular. Residues 286–307 (TLFALRMATWNQILDPWVYILL) traverse the membrane as a helical segment. Topologically, residues 308 to 366 (RKAVLRNLYKLASRCCGVNIISLHIWELSSIKNSLKVAAISESPAAEKENQQASSEAGL) are cytoplasmic.

It belongs to the G-protein coupled receptor 1 family. As to expression, highest expression in pregnant ovary. Also found in a low extent in the kidney. In the brain, expressed in astrocytes and oligodendrocytes, and meningeal fibroblasts, but not in migroglia cells.

It is found in the cell membrane. Receptor for prostaglandin F2-alpha (PGF2-alpha). The activity of this receptor is mediated by G proteins which activate a phosphatidylinositol-calcium second messenger system. Initiates luteolysis in the corpus luteum. The protein is Prostaglandin F2-alpha receptor (Ptgfr) of Rattus norvegicus (Rat).